A 316-amino-acid polypeptide reads, in one-letter code: MTLRIATVSLNSAVDQTVTVPGFTADAVNRVAASRIDAGGKGVNVASFLAHVGHGVAVTGLLGAENAALFARHFAATGLVDACQRLPGATRTNVKIVDPLQDQVTDLNFPGIAAGPADLDAVAATLTELLAQGLDWVALCGSLPAGIGAEAYAELAALARKGGARVALDTSGPALGLALAARPDIVKPNVAELGAHLGRTLTGLESVREAARDLAASGVGLVAVSMGAGGAVLVRGAEAVLAIPPATPIASTVGAGDAMVAGLIHAATLGLDLAETARLATAFSLGALGEIGPHLPPPERLAALARTVTVKTLPPV.

ATP is bound by residues serine 225–glycine 230 and glycine 256–aspartate 257. The Proton acceptor role is filled by aspartate 257.

This sequence belongs to the carbohydrate kinase PfkB family.

The catalysed reaction is beta-D-fructose 1-phosphate + ATP = beta-D-fructose 1,6-bisphosphate + ADP + H(+). In terms of biological role, catalyzes the ATP-dependent phosphorylation of fructose-l-phosphate to fructose-l,6-bisphosphate. The protein is 1-phosphofructokinase of Rhodobacter capsulatus (Rhodopseudomonas capsulata).